Reading from the N-terminus, the 912-residue chain is Putative respiratory burst oxidase homolog protein J (912 aa).

Disordered regions lie at residues 1–51 (MKNN…GGGI) and 73–112 (WRKS…RTTS). The Cytoplasmic segment spans residues 1 to 323 (MKNNKKVGTE…VVVTAELMYE (323 aa)). Polar residues-rich tracts occupy residues 29–44 (SVKQ…NPES) and 78–87 (NLGSPSTRKS). EF-hand-like stretches follow at residues 147–155 (AVDGRLPKD) and 181–193 (RQIK…DKEQ). One can recognise an EF-hand domain in the interval 205–240 (DLDCRLQIFFDMCDKDGDGKLTEEEVKEVIVLSASA). Residues Asp-218, Asp-220, Asp-222, Lys-224, and Glu-229 each contribute to the Ca(2+) site. Ser-294 carries the phosphoserine modification. The helical transmembrane segment at 324 to 344 (HWKKIWVVTLWLAVNVVLFMW) threads the bilayer. At 345-363 (KYEEFTTSPLYNITGRCLC) the chain is on the extracellular side. Residues 364–384 (AAKGTAEILKLNMALILVPVL) form a helical membrane-spanning segment. The Ferric oxidoreductase domain occupies 366–523 (KGTAEILKLN…LLVIAYALLI (158 aa)). At 385–410 (RRTLTFLRSTFLNHLIPFDDNINFHK) the chain is on the cytoplasmic side. Residues 411–431 (LIAVAIAVISLLHTALHMLCN) traverse the membrane as a helical segment. Over 432-458 (YPRLSSCPYNFYSDYAGNLLGAKQPTY) the chain is Extracellular. The chain crosses the membrane as a helical span at residues 459-479 (LGLMLTPVSVTGVLMIIFMGI). The Cytoplasmic segment spans residues 480–510 (SFTLAMHYFRRNIVKLPIPFNRLAGFNSFWY). The chain crosses the membrane as a helical span at residues 511–531 (AHHLLVIAYALLIIHGYILII). At 532-697 (EKPWYQKTTW…PYGAPAQSYQ (166 aa)) the chain is on the extracellular side. In terms of domain architecture, FAD-binding FR-type spans 562 to 695 (EHNHRVHIIK…KGPYGAPAQS (134 aa)). A helical transmembrane segment spans residues 698–718 (KFDILLLIGLGIGATPFISIL). Residues 719-912 (KDMLNNLKPG…TRFTFHKENF (194 aa)) lie on the Cytoplasmic side of the membrane.

The protein belongs to the RBOH (TC 5.B.1.3) family. Monomer and homodimer.

The protein localises to the membrane. Its function is as follows. Calcium-dependent NADPH oxidase that generates superoxide. The chain is Putative respiratory burst oxidase homolog protein J (RBOHJ) from Arabidopsis thaliana (Mouse-ear cress).